The chain runs to 307 residues: Streptomycin 6-kinase (307 aa).

133 to 145 (LAGLLNRLHSVPA) is a binding site for streptomycin. D201 acts as the Proton acceptor in catalysis.

It belongs to the aminoglycoside phosphotransferase family.

It catalyses the reaction streptomycin + ATP = streptomycin 6-phosphate + ADP + H(+). Functionally, the aminoglycoside phosphotransferases achieve inactivation of their antibiotic substrates by phosphorylation. This chain is Streptomycin 6-kinase (aphD), found in Streptomyces griseus.